Consider the following 366-residue polypeptide: Methyltransferase calH (366 aa).

S-adenosyl-L-methionine-binding positions include T189, D216, and 245-246 (NA).

It belongs to the class I-like SAM-binding methyltransferase superfamily.

Its pathway is secondary metabolite biosynthesis. Its function is as follows. Methyltransferase; part of the gene cluster that mediates the biosynthesis of calbistrin A and related compounds. Calbistrin A is a secondary metabolite with an interesting structure that was recently found to have bioactivity against leukemia cells. It consists of two polyketides linked by an ester bond: a bicyclic decalin containing polyketide and a linear 12 carbon dioic acid structure. The polyketide synthase calA is probably responsible for forming the decalin moiety. Because calA lacks a designated enoylreductase (ER) domain, the required activity is provided by the trans-enoyl reductase calK. Following release from the PKS, calF then probably catalyzes the oxidation and the subsequent Diels Alder cycloisomerization that lead to the formation of the decalin moiety. The decalin polyketide backbone includes two C-methyl groups, at C7 and C11 in backbone, of which the C7 position is probably methylated by the methyltransferase domain of calA. A candidate for adding the methyl group at C11, if not done by CalA, is the cluster methyltransferase calH. Several additional tailoring enzymes within the cluster could be involved in the modification of the decalin polyketide product. Those include the 3 cytochrome P450 monooxygenases CalE, CalG and CalL, of which one might be responsible for the introduction of the extra hydroxyl group attached to the backbone of the decalin moiety, at position C9 in the backbone, that allows for attachment of the linear moiety. One tailoring enzyme activity that is expected to be involved in biosynthesis of calbistrin is an acyltransferase for connecting the two polyketide synthase products, and which could be performed by the cluster acyltransferase calJ. The enzyme responsible for the biosynthesis of the linear moiety, probably a second PKS, has not been identified yet. The sequence is that of Methyltransferase calH from Penicillium decumbens.